The chain runs to 207 residues: Claudin-11 (207 aa).

Residue methionine 1 is a topological domain, cytoplasmic. The chain crosses the membrane as a helical span at residues valine 2 to isoleucine 22. Topologically, residues valine 23–arginine 82 are extracellular. A helical membrane pass occupies residues alanine 83–leucine 103. The Cytoplasmic portion of the chain corresponds to proline 104–leucine 122. The chain crosses the membrane as a helical span at residues alanine 123–valine 143. Residues cysteine 144–serine 157 are Extracellular-facing. A helical transmembrane segment spans residues leucine 158–cysteine 178. Topologically, residues serine 179–valine 207 are cytoplasmic. Phosphoserine is present on residues serine 193, serine 194, serine 197, and serine 198.

The protein belongs to the claudin family. Interacts with tetraspanin-3/TSPAN3. Interacts with OCLN.

The protein localises to the cell junction. The protein resides in the tight junction. It is found in the cell membrane. Plays a major role in tight junction-specific obliteration of the intercellular space, through calcium-independent cell-adhesion activity. This is Claudin-11 (Cldn11) from Rattus norvegicus (Rat).